The sequence spans 554 residues: Hydroxylamine reductase (554 aa).

The [2Fe-2S] cluster site is built by cysteine 3, cysteine 6, cysteine 18, and cysteine 25. Hybrid [4Fe-2O-2S] cluster contacts are provided by histidine 252, glutamate 276, cysteine 320, cysteine 408, cysteine 436, cysteine 461, glutamate 495, and lysine 497. At cysteine 408 the chain carries Cysteine persulfide.

The protein belongs to the HCP family. It depends on [2Fe-2S] cluster as a cofactor. Requires hybrid [4Fe-2O-2S] cluster as cofactor.

The protein localises to the cytoplasm. It carries out the reaction A + NH4(+) + H2O = hydroxylamine + AH2 + H(+). In terms of biological role, catalyzes the reduction of hydroxylamine to form NH(3) and H(2)O. This chain is Hydroxylamine reductase, found in Shewanella baltica (strain OS185).